The following is a 79-amino-acid chain: Conotoxin Kt6.1 (79 aa).

A signal peptide spans 1 to 22 (MKLTCVLIISVLFLTASQLITA). A propeptide spanning residues 23–47 (VYSRDKQQYRAARLRDEMRNLKGAR) is cleaved from the precursor. 3 disulfides stabilise this stretch: Cys-49–Cys-62, Cys-56–Cys-67, and Cys-61–Cys-77. 4-hydroxyproline occurs at positions 60 and 63.

The protein belongs to the conotoxin O1 superfamily. Expressed by the venom duct.

It localises to the secreted. Functionally, ion channel inhibitor that inhibits the increase in intracellular calcium upon depolarization in DRG neurons. In vivo, both intraperitoneal and intracranial injections into mice induce hyperactivity. The protein is Conotoxin Kt6.1 of Conus kintoki (Cone snail).